Here is a 351-residue protein sequence, read N- to C-terminus: Dihydroorotate dehydrogenase (quinone) (351 aa).

FMN contacts are provided by residues 61-65 and Thr85; that span reads AGLDK. Residue Lys65 participates in substrate binding. 110 to 114 is a binding site for substrate; sequence NRMGF. 2 residues coordinate FMN: Asn139 and Asn172. Position 172 (Asn172) interacts with substrate. Ser175 serves as the catalytic Nucleophile. Asn177 is a substrate binding site. 2 residues coordinate FMN: Lys217 and Thr245. 246 to 247 lines the substrate pocket; sequence NT. FMN is bound by residues Gly268, Gly297, and 318-319; that span reads YS.

Belongs to the dihydroorotate dehydrogenase family. Type 2 subfamily. In terms of assembly, monomer. FMN is required as a cofactor.

The protein localises to the cell membrane. It carries out the reaction (S)-dihydroorotate + a quinone = orotate + a quinol. It participates in pyrimidine metabolism; UMP biosynthesis via de novo pathway; orotate from (S)-dihydroorotate (quinone route): step 1/1. In terms of biological role, catalyzes the conversion of dihydroorotate to orotate with quinone as electron acceptor. This chain is Dihydroorotate dehydrogenase (quinone), found in Xanthomonas euvesicatoria pv. vesicatoria (strain 85-10) (Xanthomonas campestris pv. vesicatoria).